Here is a 372-residue protein sequence, read N- to C-terminus: MESVLKQSRRIVVKVGSSLVTNQGQGLDHSALAHWAGQIVKLKKTGKEVVLVSSGAIAEGMQRLKWKKRPHAVHELQAAAAVGQMGLVQAYETCFRKHELHSAQILLTHEDLSDRKRYLNARSTLATLLDLNVIPIINENDTVATDEIRFGDNDTLAALVTNLIEADVLVILTDQRGLFTADPRKDTQAKLVEQAKAGDADIERMAGGAGSEIGRGGMLTKVLAAKRAARSGAHTVIASGREADVLIRLARGEAIGTQLLAETMTLAARKQWLADHLQIRGNVTLDEGAVEALAVGGKSLLPVGVTDVRGNFERGEVVGCLDPHGREIARGLVNYNAAETRRILRRASDEIESLLGYIGEPELIHRDNLVLL.

An ATP-binding site is contributed by Lys14. Substrate is bound by residues Ser54, Asp141, and Asn153. 173-174 (TD) contacts ATP. A PUA domain is found at 280–358 (RGNVTLDEGA…DEIESLLGYI (79 aa)).

It belongs to the glutamate 5-kinase family.

Its subcellular location is the cytoplasm. The catalysed reaction is L-glutamate + ATP = L-glutamyl 5-phosphate + ADP. Its pathway is amino-acid biosynthesis; L-proline biosynthesis; L-glutamate 5-semialdehyde from L-glutamate: step 1/2. Its function is as follows. Catalyzes the transfer of a phosphate group to glutamate to form L-glutamate 5-phosphate. This is Glutamate 5-kinase from Nitrosospira multiformis (strain ATCC 25196 / NCIMB 11849 / C 71).